Consider the following 226-residue polypeptide: Enolase-phosphatase E1 (226 aa).

Belongs to the HAD-like hydrolase superfamily. MasA/MtnC family. As to quaternary structure, monomer. It depends on Mg(2+) as a cofactor.

It catalyses the reaction 5-methylsulfanyl-2,3-dioxopentyl phosphate + H2O = 1,2-dihydroxy-5-(methylsulfanyl)pent-1-en-3-one + phosphate. It participates in amino-acid biosynthesis; L-methionine biosynthesis via salvage pathway; L-methionine from S-methyl-5-thio-alpha-D-ribose 1-phosphate: step 3/6. It functions in the pathway amino-acid biosynthesis; L-methionine biosynthesis via salvage pathway; L-methionine from S-methyl-5-thio-alpha-D-ribose 1-phosphate: step 4/6. Bifunctional enzyme that catalyzes the enolization of 2,3-diketo-5-methylthiopentyl-1-phosphate (DK-MTP-1-P) into the intermediate 2-hydroxy-3-keto-5-methylthiopentenyl-1-phosphate (HK-MTPenyl-1-P), which is then dephosphorylated to form the acireductone 1,2-dihydroxy-3-keto-5-methylthiopentene (DHK-MTPene). The sequence is that of Enolase-phosphatase E1 from Shewanella pealeana (strain ATCC 700345 / ANG-SQ1).